The primary structure comprises 370 residues: Cytochrome b (370 aa).

4 helical membrane-spanning segments follow: residues 25-45, 69-90, 105-125, and 170-190; these read FGSMLLACLTLQLLTGFFLAV, WMMQNLHAIGASMFFICIYIHI, WLSGTTLLIMLMATAFFGYVL, and FFALHFILPFGIISLSSLHIL. The heme b site is built by His-75 and His-89. Residues His-174 and His-188 each coordinate heme b. His-193 serves as a coordination point for a ubiquinone. 4 helical membrane passes run 218–238, 280–300, 312–332, and 339–358; these read YKDMLMLTIMTIMLLTIVSFF, LGGALALTMSIMMLLTLPFTH, LMQLTFWTFTATFLVISWTAT, and FTTISQVAALMYFLFFISNP.

The protein belongs to the cytochrome b family. In terms of assembly, the cytochrome bc1 complex contains 3 respiratory subunits (MT-CYB, CYC1 and UQCRFS1), 2 core proteins (UQCRC1 and UQCRC2) and probably 6 low-molecular weight proteins. Heme b is required as a cofactor.

The protein resides in the mitochondrion inner membrane. Its function is as follows. Component of the ubiquinol-cytochrome c reductase complex (complex III or cytochrome b-c1 complex) that is part of the mitochondrial respiratory chain. The b-c1 complex mediates electron transfer from ubiquinol to cytochrome c. Contributes to the generation of a proton gradient across the mitochondrial membrane that is then used for ATP synthesis. The polypeptide is Cytochrome b (MT-CYB) (Chilabothrus strigilatus strigilatus (New Providence boa constrictor)).